A 312-amino-acid polypeptide reads, in one-letter code: Structure-specific endonuclease subunit SLX1 (312 aa).

In terms of domain architecture, GIY-YIG spans 9 to 92; the sequence is DFYGCYLLQS…QHGYQTRYIK (84 aa). The SLX1-type zinc-finger motif lies at 219–282; it reads CQFCNKIIKH…IPQSPKCPKC (64 aa).

The protein belongs to the SLX1 family. In terms of assembly, forms a heterodimer with SLX4. It depends on a divalent metal cation as a cofactor.

It localises to the nucleus. Functionally, catalytic subunit of the SLX1-SLX4 structure-specific endonuclease that resolves DNA secondary structures generated during DNA repair and recombination. Has endonuclease activity towards branched DNA substrates, introducing single-strand cuts in duplex DNA close to junctions with ss-DNA. The chain is Structure-specific endonuclease subunit SLX1 from Candida glabrata (strain ATCC 2001 / BCRC 20586 / JCM 3761 / NBRC 0622 / NRRL Y-65 / CBS 138) (Yeast).